Consider the following 533-residue polypeptide: NAD(P)H-quinone oxidoreductase chain 4 1 (533 aa).

A run of 14 helical transmembrane segments spans residues 6-26 (FPWL…IPLI), 37-57 (YSLF…WQHF), 87-107 (LSMP…LASW), 113-133 (PKLF…VFTA), 137-157 (MLFF…ISIW), 169-189 (FILY…ALAF), 209-229 (WLEL…LSIF), 243-263 (NAPG…YALI), 277-297 (FAPV…LNAF), 311-331 (ISHM…GLNG), 332-352 (ALLQ…LAGV), 376-396 (FALF…SGFV), 417-437 (VTIL…LSML), and 461-481 (LFVA…PKLT).

Belongs to the complex I subunit 4 family.

It is found in the cellular thylakoid membrane. It carries out the reaction a plastoquinone + NADH + (n+1) H(+)(in) = a plastoquinol + NAD(+) + n H(+)(out). The catalysed reaction is a plastoquinone + NADPH + (n+1) H(+)(in) = a plastoquinol + NADP(+) + n H(+)(out). Functionally, NDH-1 shuttles electrons from NAD(P)H, via FMN and iron-sulfur (Fe-S) centers, to quinones in the respiratory chain. The immediate electron acceptor for the enzyme in this species is believed to be plastoquinone. Couples the redox reaction to proton translocation (for every two electrons transferred, four hydrogen ions are translocated across the cytoplasmic membrane), and thus conserves the redox energy in a proton gradient. The protein is NAD(P)H-quinone oxidoreductase chain 4 1 of Synechococcus elongatus (strain ATCC 33912 / PCC 7942 / FACHB-805) (Anacystis nidulans R2).